Consider the following 721-residue polypeptide: Polyphosphate kinase (721 aa).

Position 47 (Asn47) interacts with ATP. Mg(2+) contacts are provided by Arg377 and Arg407. The active-site Phosphohistidine intermediate is His437. The ATP site is built by Tyr471, Arg567, and His595.

The protein belongs to the polyphosphate kinase 1 (PPK1) family. Mg(2+) is required as a cofactor. In terms of processing, an intermediate of this reaction is the autophosphorylated ppk in which a phosphate is covalently linked to a histidine residue through a N-P bond.

The catalysed reaction is [phosphate](n) + ATP = [phosphate](n+1) + ADP. Catalyzes the reversible transfer of the terminal phosphate of ATP to form a long-chain polyphosphate (polyP). The chain is Polyphosphate kinase from Exiguobacterium sp. (strain ATCC BAA-1283 / AT1b).